The primary structure comprises 248 residues: 4-hydroxy-tetrahydrodipicolinate reductase (248 aa).

Residues 9–14, 77–79, and 104–107 contribute to the NAD(+) site; these read GAQGRV, GTT, and APNF. The Proton donor/acceptor role is filled by H134. (S)-2,3,4,5-tetrahydrodipicolinate is bound at residue H135. The active-site Proton donor is the K138. 144 to 145 is a (S)-2,3,4,5-tetrahydrodipicolinate binding site; the sequence is GT. The segment at 157 to 176 is disordered; that stretch reads RREAGMPTQPDATEQSLDGA.

The protein belongs to the DapB family.

It is found in the cytoplasm. It carries out the reaction (S)-2,3,4,5-tetrahydrodipicolinate + NAD(+) + H2O = (2S,4S)-4-hydroxy-2,3,4,5-tetrahydrodipicolinate + NADH + H(+). It catalyses the reaction (S)-2,3,4,5-tetrahydrodipicolinate + NADP(+) + H2O = (2S,4S)-4-hydroxy-2,3,4,5-tetrahydrodipicolinate + NADPH + H(+). The protein operates within amino-acid biosynthesis; L-lysine biosynthesis via DAP pathway; (S)-tetrahydrodipicolinate from L-aspartate: step 4/4. Its function is as follows. Catalyzes the conversion of 4-hydroxy-tetrahydrodipicolinate (HTPA) to tetrahydrodipicolinate. This is 4-hydroxy-tetrahydrodipicolinate reductase from Corynebacterium diphtheriae (strain ATCC 700971 / NCTC 13129 / Biotype gravis).